The primary structure comprises 386 residues: Na(+)/H(+) antiporter NhaA (386 aa).

10 consecutive transmembrane segments (helical) span residues 10 to 30 (EFSIPLLAGVLTALVWANVAP), 45 to 65 (LSFHFVTNDIFMAFFFAIAAV), 84 to 104 (LNPLLATAGGVVGPVGVYLAL), 116 to 136 (GWGIPTATDIAFAWLAARLIF), 142 to 162 (VIAFLLLLAIADDAIGLVIIA), 169 to 189 (VLPVAPPWLMLTAAGMLIAFI), 261 to 281 (IIVDFGLFMFGLANAGVGFSA), 287 to 307 (WLVFCALLFGKVTGIFVFALL), 323 to 343 (HLLVAGIIAGIGFTVALFVAG), and 358 to 378 (GAILSIAVFPVAMAAAKLLGI).

The protein belongs to the NhaA Na(+)/H(+) (TC 2.A.33) antiporter family.

The protein resides in the cell inner membrane. The enzyme catalyses Na(+)(in) + 2 H(+)(out) = Na(+)(out) + 2 H(+)(in). Functionally, na(+)/H(+) antiporter that extrudes sodium in exchange for external protons. The chain is Na(+)/H(+) antiporter NhaA from Geotalea uraniireducens (strain Rf4) (Geobacter uraniireducens).